Reading from the N-terminus, the 182-residue chain is Aralkylamine dehydrogenase light chain (182 aa).

The segment at residues 1-47 (MRWLDKFGESLSRSVAHKTSRRSVLRSVGKLMVGSAFVLPVLPVARA) is a signal peptide (tat-type signal). Intrachain disulfides connect cysteine 75/cysteine 140, cysteine 81/cysteine 113, cysteine 88/cysteine 171, cysteine 90/cysteine 138, cysteine 91/cysteine 135, cysteine 98/cysteine 129, and cysteine 130/cysteine 161. Aspartate 84 lines the substrate pocket. Tryptophan 109 acts as the Tryptophylquinone 6'-substrate hemiaminal intermediate in catalysis. A Tryptophylquinone modification is found at tryptophan 109. The tryptophan tryptophylquinone (Trp-Trp) cross-link spans 109-160 (WIGTCHNPHDGKDYLISYHDCCGKTACGRCQCNTQTRERPGYEFFLHNDVNW). Residue aspartate 128 is the Proton acceptor of the active site. Position 156–158 (156–158 (NDV)) interacts with substrate.

It belongs to the aromatic amine dehydrogenase light chain family. As to quaternary structure, heterotetramer of two light and two heavy chains. Binds two azurin molecules per heterotetramer. The cofactor is tryptophan tryptophylquinone residue. Tryptophan tryptophylquinone (TTQ) is formed by oxidation of the indole ring of a tryptophan to form tryptophylquinone followed by covalent cross-linking with another tryptophan residue. Post-translationally, predicted to be exported by the Tat system. The position of the signal peptide cleavage has been experimentally proven.

The protein localises to the periplasm. The enzyme catalyses an aralkylamine + 2 oxidized [azurin] + H2O = an aromatic aldehyde + 2 reduced [azurin] + NH4(+) + 2 H(+). Irreversibly inhibited by phenylhydrazine, hydroxylamine, semicarbazide, hydrazine and aminoguanidine. Reversibly inhibited by isonicotinic acid hydrazide (isoniazid) and isonicotinic acid 2-isopropyl hydrazide (iproniazid). Oxidizes primary aromatic amines and, more slowly, some long-chain aliphatic amines, but not methylamine or ethylamine. Uses azurin as an electron acceptor to transfer electrons from the reduced tryptophylquinone cofactor. This chain is Aralkylamine dehydrogenase light chain, found in Alcaligenes faecalis.